Consider the following 384-residue polypeptide: MDAALLLNVEGVKKTILHGGTGELPNFITGSRVIFHFRTMKCDEERTVIDDSRQVGQPMHIIIGNMFKLEVWEILLTSMRVHEVAEFWCDTIHTGVYPILSRSLRQMAQGKDPTEWHVHTCGLANMFAYHTLGYEDLDELQKEPQPLVFVIELLQVDAPSDYQRETWNLSNHEKMKAVPVLHGEGNRLFKLGRYEEASSKYQEAIICLRNLQTKEKPWEVQWLKLEKMINTLILNYCQCLLKKEEYYEVLEHTSDILRHHPGIVKAYYVRARAHAEVWNEAEAKADLRKVLELEPSMQKAVRRELRLLENRMAEKQEEERLRCRNMLSQGATQPPAEPPTEPPAQSSTEPPAEPPPAPSAELSAGPPAETATEPPPSPGHSLQH.

Residues 53 to 145 form the PPIase FKBP-type domain; the sequence is RQVGQPMHII…DLDELQKEPQ (93 aa). 3 TPR repeats span residues 178–211, 230–263, and 264–297; these read VPVL…LRNL, NTLI…HPGI, and VKAY…EPSM. The segment at 328-384 is disordered; that stretch reads SQGATQPPAEPPTEPPAQSSTEPPAEPPPAPSAELSAGPPAETATEPPPSPGHSLQH. The span at 359 to 372 shows a compositional bias: low complexity; that stretch reads SAELSAGPPAETAT.

In terms of assembly, interacts with NUB1.

The protein resides in the cytoplasm. Its subcellular location is the nucleus. Functionally, may be important in protein trafficking and/or protein folding and stabilization. The polypeptide is Aryl-hydrocarbon-interacting protein-like 1 (AIPL1) (Pan paniscus (Pygmy chimpanzee)).